Here is a 592-residue protein sequence, read N- to C-terminus: Probable 6-phosphofructo-2-kinase C222.13c (592 aa).

The interval 1–80 (MSNTGSARTE…PANDVEKMEV (80 aa)) is disordered. A compositionally biased stretch (basic and acidic residues) spans 57 to 66 (SIFKREELTP). Residue 150-157 (GIPATGKS) coordinates ATP. Catalysis depends on residues Asp-235 and Cys-266. Arg-300 contacts beta-D-fructose 6-phosphate. His-527 serves as the catalytic Proton donor.

Its subcellular location is the cytoplasm. The protein resides in the nucleus. The catalysed reaction is beta-D-fructose 6-phosphate + ATP = beta-D-fructose 2,6-bisphosphate + ADP + H(+). Synthesis of fructose 2,6-bisphosphate. This chain is Probable 6-phosphofructo-2-kinase C222.13c, found in Schizosaccharomyces pombe (strain 972 / ATCC 24843) (Fission yeast).